Reading from the N-terminus, the 160-residue chain is Transcriptional repressor NrdR (160 aa).

Residues 3–34 fold into a zinc finger; it reads CPYCQYEDTQVKDSRPSEEGTVIRRRRICSVC. The ATP-cone domain occupies 49-139; it reads LLVLKKSGRY…VYRDFRNASD (91 aa).

Belongs to the NrdR family. The cofactor is Zn(2+).

Negatively regulates transcription of bacterial ribonucleotide reductase nrd genes and operons by binding to NrdR-boxes. The protein is Transcriptional repressor NrdR of Bartonella henselae (strain ATCC 49882 / DSM 28221 / CCUG 30454 / Houston 1) (Rochalimaea henselae).